Here is a 321-residue protein sequence, read N- to C-terminus: tRNA-dihydrouridine synthase B (321 aa).

FMN is bound by residues 16–18 (PMA) and Gln-70. Catalysis depends on Cys-100, which acts as the Proton donor. FMN is bound by residues Lys-139, 200-202 (NGD), and 224-225 (GR).

Belongs to the Dus family. DusB subfamily. FMN is required as a cofactor.

The enzyme catalyses a 5,6-dihydrouridine in tRNA + NAD(+) = a uridine in tRNA + NADH + H(+). It catalyses the reaction a 5,6-dihydrouridine in tRNA + NADP(+) = a uridine in tRNA + NADPH + H(+). Functionally, catalyzes the synthesis of 5,6-dihydrouridine (D), a modified base found in the D-loop of most tRNAs, via the reduction of the C5-C6 double bond in target uridines. The sequence is that of tRNA-dihydrouridine synthase B from Klebsiella pneumoniae.